Here is a 138-residue protein sequence, read N- to C-terminus: Ig heavy chain V region TEPC 1017 (138 aa).

The N-terminal stretch at 1–20 (MGWSYIILFLVATATDVHSQ) is a signal peptide. The interval 21–49 (VQLQQPGAELVKPGASVQLSCKASGHTFT) is framework-1. The cysteines at positions 41 and 115 are disulfide-linked. The interval 50 to 54 (NYWIH) is complementarity-determining-1. The tract at residues 55 to 68 (WVKQRPGQGLEWIG) is framework-2. The complementarity-determining-2 stretch occupies residues 69-85 (EINPNDGRSNYNEKFKN). The segment at 86-117 (KATLTVDKSSSTAYMQLSSLTPEEFAVYYCAR) is framework-3. The complementarity-determining-3 stretch occupies residues 118–127 (SDGYYDWFVY). The tract at residues 128-138 (WGQGTLVTFSA) is framework-4.

The polypeptide is Ig heavy chain V region TEPC 1017 (Mus musculus (Mouse)).